Reading from the N-terminus, the 99-residue chain is Small ribosomal subunit protein bS21 (99 aa).

The tract at residues 60 to 99 is disordered; sequence KKLQREGLLPMKPKPVFGAGPGGDRRGPGAGPGAGPRPAR.

Belongs to the bacterial ribosomal protein bS21 family.

The chain is Small ribosomal subunit protein bS21 from Rhodopseudomonas palustris (strain BisA53).